The chain runs to 137 residues: Large ribosomal subunit protein uL16c (137 aa).

It belongs to the universal ribosomal protein uL16 family. In terms of assembly, part of the 50S ribosomal subunit.

The protein resides in the plastid. The chain is Large ribosomal subunit protein uL16c (rpl16) from Helicosporidium sp. subsp. Simulium jonesii (Green alga).